The sequence spans 341 residues: Shk1 kinase-binding protein 15 (341 aa).

5 WD repeats span residues 33–70 (AHEGALTALAVDGIYLASTSSDETIKIFDHTRNVQIAD), 77–114 (IANACIRDMCFTKNHLLACHDNGQISMWSKGSWLLVHT), 119–157 (SHKGITGIAVHPSEKLALTVGGDGKLRLWDLVRGKGGKV), 197–234 (SSKSQLNALCLYQSKLIVGRDNGTVLVLDTSDGKILHE), and 237–274 (AHKKRVKSVYPVDDYLITASSDGSVCIWDKDWNLVIEH). A disordered region spans residues 293-341 (NSEPKNVEDEAAKRQSLDSETSETSSESESESEYYSTSKQPPVKRTKHA). The span at 297-309 (KNVEDEAAKRQSL) shows a compositional bias: basic and acidic residues.

Negatively regulates pak1/shk1 kinase activity leading to proper execution of cytoskeletal remodeling and cytokinetic functions. Its function is as follows. Interacts with pak1/shk1. The protein is Shk1 kinase-binding protein 15 (skb15) of Schizosaccharomyces pombe (strain 972 / ATCC 24843) (Fission yeast).